A 346-amino-acid polypeptide reads, in one-letter code: Methylthioribose-1-phosphate isomerase (346 aa).

Residues arginine 54–alanine 56, arginine 91, and glutamine 192 each bind substrate. The active-site Proton donor is aspartate 233. Asparagine 243–lysine 244 provides a ligand contact to substrate.

The protein belongs to the eIF-2B alpha/beta/delta subunits family. MtnA subfamily.

It carries out the reaction 5-(methylsulfanyl)-alpha-D-ribose 1-phosphate = 5-(methylsulfanyl)-D-ribulose 1-phosphate. Its pathway is amino-acid biosynthesis; L-methionine biosynthesis via salvage pathway; L-methionine from S-methyl-5-thio-alpha-D-ribose 1-phosphate: step 1/6. Its function is as follows. Catalyzes the interconversion of methylthioribose-1-phosphate (MTR-1-P) into methylthioribulose-1-phosphate (MTRu-1-P). This is Methylthioribose-1-phosphate isomerase from Yersinia enterocolitica serotype O:8 / biotype 1B (strain NCTC 13174 / 8081).